The sequence spans 232 residues: Large ribosomal subunit protein uL1 (232 aa).

Belongs to the universal ribosomal protein uL1 family. In terms of assembly, part of the 50S ribosomal subunit.

In terms of biological role, binds directly to 23S rRNA. The L1 stalk is quite mobile in the ribosome, and is involved in E site tRNA release. Protein L1 is also a translational repressor protein, it controls the translation of the L11 operon by binding to its mRNA. The sequence is that of Large ribosomal subunit protein uL1 from Rhizorhabdus wittichii (strain DSM 6014 / CCUG 31198 / JCM 15750 / NBRC 105917 / EY 4224 / RW1) (Sphingomonas wittichii).